The chain runs to 214 residues: Octanoyltransferase (214 aa).

Residues 28–210 (GTAEDALYLL…EFGKVFTDTA (183 aa)) enclose the BPL/LPL catalytic domain. Residues 73-80 (RGGNITCH), 140-142 (SIG), and 153-155 (GLS) contribute to the substrate site. Residue Cys171 is the Acyl-thioester intermediate of the active site.

The protein belongs to the LipB family.

The protein resides in the cytoplasm. The enzyme catalyses octanoyl-[ACP] + L-lysyl-[protein] = N(6)-octanoyl-L-lysyl-[protein] + holo-[ACP] + H(+). Its pathway is protein modification; protein lipoylation via endogenous pathway; protein N(6)-(lipoyl)lysine from octanoyl-[acyl-carrier-protein]: step 1/2. Catalyzes the transfer of endogenously produced octanoic acid from octanoyl-acyl-carrier-protein onto the lipoyl domains of lipoate-dependent enzymes. Lipoyl-ACP can also act as a substrate although octanoyl-ACP is likely to be the physiological substrate. The sequence is that of Octanoyltransferase from Maridesulfovibrio salexigens (strain ATCC 14822 / DSM 2638 / NCIMB 8403 / VKM B-1763) (Desulfovibrio salexigens).